We begin with the raw amino-acid sequence, 396 residues long: Multidrug efflux protein YfmO (396 aa).

12 helical membrane-spanning segments follow: residues 20–40 (VWAV…VDPI), 56–76 (SLLF…SGAI), 80–100 (IGAK…AGLG), 114–134 (GGWG…IVGV), 142–162 (AIIL…LAGG), 171–191 (APFF…SFML), 214–234 (GLLT…ILLA), 249–269 (YVFF…APLV), 278–298 (SLVV…IWTD), 301–321 (TLII…NTIM), 339–359 (AYSS…GMLS), and 364–384 (ASTP…VLLM).

The protein belongs to the major facilitator superfamily.

The protein localises to the cell membrane. Functionally, acts to efflux copper or a copper complex. It is possible that YfmO could contribute to copper resistance. The chain is Multidrug efflux protein YfmO (yfmO) from Bacillus subtilis (strain 168).